Consider the following 1326-residue polypeptide: Coiled-coil domain-containing protein 171 (1326 aa).

Coiled-coil stretches lie at residues 53 to 294, 323 to 391, 450 to 561, 597 to 630, 660 to 707, 765 to 792, 979 to 1143, and 1217 to 1241; these read TTKH…RAAH, AEAV…RLQY, SFSV…AFHK, SELC…ICKN, WHRQ…EQLV, FKLE…MKKK, FTQR…KECV, and IMTL…LHTA. The disordered stretch occupies residues 1306 to 1326; the sequence is SSHSSPVTMSANANRPTQIGL.

The polypeptide is Coiled-coil domain-containing protein 171 (CCDC171) (Homo sapiens (Human)).